The following is a 428-amino-acid chain: Enolase (428 aa).

Residue Gln163 coordinates (2R)-2-phosphoglycerate. Glu205 functions as the Proton donor in the catalytic mechanism. Mg(2+) contacts are provided by Asp242, Glu285, and Asp312. Residues Lys337, Arg366, Ser367, and Lys388 each contribute to the (2R)-2-phosphoglycerate site. Lys337 (proton acceptor) is an active-site residue.

The protein belongs to the enolase family. Requires Mg(2+) as cofactor.

The protein localises to the cytoplasm. It is found in the secreted. Its subcellular location is the cell surface. The catalysed reaction is (2R)-2-phosphoglycerate = phosphoenolpyruvate + H2O. It functions in the pathway carbohydrate degradation; glycolysis; pyruvate from D-glyceraldehyde 3-phosphate: step 4/5. In terms of biological role, catalyzes the reversible conversion of 2-phosphoglycerate (2-PG) into phosphoenolpyruvate (PEP). It is essential for the degradation of carbohydrates via glycolysis. The sequence is that of Enolase from Rhodopirellula baltica (strain DSM 10527 / NCIMB 13988 / SH1).